The sequence spans 43 residues: Defensin (43 aa).

Cystine bridges form between Cys3–Cys34, Cys20–Cys39, and Cys24–Cys41.

It is found in the secreted. Its function is as follows. Antibacterial peptide active against Gram-positive and Gram-negative bacteria. The sequence is that of Defensin from Palomena prasina (Green shield bug).